We begin with the raw amino-acid sequence, 138 residues long: MLVPRKLKWRKPQRGRMKGRAKGGTEVQFGEYGLQALEPAWITNRQIEAARIAMTRKIRRGGKVWINIFPHKPVTKKPAETRMGSGKGSPEEYVAVVKPGRVMFEMSGVGEELAREAMRLAAQKLPIKTRFLVRGGGS.

This sequence belongs to the universal ribosomal protein uL16 family. As to quaternary structure, part of the 50S ribosomal subunit.

Functionally, binds 23S rRNA and is also seen to make contacts with the A and possibly P site tRNAs. The polypeptide is Large ribosomal subunit protein uL16 (Rubrobacter xylanophilus (strain DSM 9941 / JCM 11954 / NBRC 16129 / PRD-1)).